Consider the following 111-residue polypeptide: UPF0125 protein SO_1475 (111 aa).

A disordered region spans residues Val-88 to Ser-111.

The protein belongs to the UPF0125 (RnfH) family.

This chain is UPF0125 protein SO_1475, found in Shewanella oneidensis (strain ATCC 700550 / JCM 31522 / CIP 106686 / LMG 19005 / NCIMB 14063 / MR-1).